Here is a 507-residue protein sequence, read N- to C-terminus: Probable aldehyde dehydrogenase (507 aa).

NAD(+) is bound at residue 219–225 (GFGVEAG). Residues E263 and C302 contribute to the active site.

It belongs to the aldehyde dehydrogenase family.

It carries out the reaction an aldehyde + NAD(+) + H2O = a carboxylate + NADH + 2 H(+). The protein is Probable aldehyde dehydrogenase of Streptomyces coelicolor (strain ATCC BAA-471 / A3(2) / M145).